The primary structure comprises 397 residues: Phosphoglycerate kinase (397 aa).

Substrate-binding positions include 21-23 (DFN), arginine 36, 59-62 (HLGR), arginine 119, and arginine 156. ATP-binding positions include lysine 207, glycine 295, glutamate 326, and 353 to 356 (GGDS).

This sequence belongs to the phosphoglycerate kinase family. As to quaternary structure, monomer.

It is found in the cytoplasm. The enzyme catalyses (2R)-3-phosphoglycerate + ATP = (2R)-3-phospho-glyceroyl phosphate + ADP. Its pathway is carbohydrate degradation; glycolysis; pyruvate from D-glyceraldehyde 3-phosphate: step 2/5. The protein is Phosphoglycerate kinase of Enterococcus faecalis (strain ATCC 700802 / V583).